Here is a 323-residue protein sequence, read N- to C-terminus: tRNA dimethylallyltransferase (323 aa).

Residue 12 to 19 participates in ATP binding; it reads GPTAAGKT. 14–19 provides a ligand contact to substrate; the sequence is TAAGKT. 2 interaction with substrate tRNA regions span residues 37–40 and 161–165; these read DSAL and QRLIR.

This sequence belongs to the IPP transferase family. As to quaternary structure, monomer. It depends on Mg(2+) as a cofactor.

The catalysed reaction is adenosine(37) in tRNA + dimethylallyl diphosphate = N(6)-dimethylallyladenosine(37) in tRNA + diphosphate. Its function is as follows. Catalyzes the transfer of a dimethylallyl group onto the adenine at position 37 in tRNAs that read codons beginning with uridine, leading to the formation of N6-(dimethylallyl)adenosine (i(6)A). This is tRNA dimethylallyltransferase from Pseudomonas putida (strain W619).